The chain runs to 407 residues: MSAVPLRNNKAAASAVRSVTVLGATGSIGDSTMDLLRASPERYRVEALTANGNVEALAKLAKEFSARFVAIADTSKFAELKAALAGTSTECGAGESAVIEAGARPADWVMAAVSGAAGLKPALAAVDRGAHVALANKECLVCAGDFFMQRAAKAGACILPADSEHNALFQALGSGNRDELVRVIITASGGPFRTWKPADIEQATLAQALKHPNWSMGQKITIDSASMMNKGLEVIEASYLFALSPDEIDVLVHPQSIIHGMVEFSDRSVVAQLGSPDMRTPIAHCLGWPDRIKGPAAKLDLAKIGQLTFEAPDFERFPGLRLAYDSLRTGKGATTVYNAANEVAVAAFIAGKIRFGAIARLVEATLEDWIRGGNQTPLTSADDAISVDHVARNRAAALLPQIALKAS.

The NADPH site is built by Thr25, Gly26, Ser27, Ile28, Asn53, and Asn136. Residue Lys137 coordinates 1-deoxy-D-xylulose 5-phosphate. Residue Glu138 participates in NADPH binding. Mn(2+) is bound at residue Asp162. The 1-deoxy-D-xylulose 5-phosphate site is built by Ser163, Glu164, Ser188, and His211. Position 164 (Glu164) interacts with Mn(2+). Gly217 is a binding site for NADPH. 1-deoxy-D-xylulose 5-phosphate is bound by residues Ser224, Asn229, Lys230, and Glu233. Position 233 (Glu233) interacts with Mn(2+).

It belongs to the DXR family. Mg(2+) serves as cofactor. It depends on Mn(2+) as a cofactor.

The catalysed reaction is 2-C-methyl-D-erythritol 4-phosphate + NADP(+) = 1-deoxy-D-xylulose 5-phosphate + NADPH + H(+). The protein operates within isoprenoid biosynthesis; isopentenyl diphosphate biosynthesis via DXP pathway; isopentenyl diphosphate from 1-deoxy-D-xylulose 5-phosphate: step 1/6. Its function is as follows. Catalyzes the NADPH-dependent rearrangement and reduction of 1-deoxy-D-xylulose-5-phosphate (DXP) to 2-C-methyl-D-erythritol 4-phosphate (MEP). In Bradyrhizobium diazoefficiens (strain JCM 10833 / BCRC 13528 / IAM 13628 / NBRC 14792 / USDA 110), this protein is 1-deoxy-D-xylulose 5-phosphate reductoisomerase.